The chain runs to 506 residues: Sodium-coupled neutral amino acid symporter 2 (506 aa).

The interval Met-1–Asn-23 is disordered. Topologically, residues Met-1–Ser-76 are cytoplasmic. The interval Met-1 to Met-96 is regulates protein turnover upon amino acid deprivation. 4 positions are modified to phosphoserine: Ser-12, Ser-21, Ser-22, and Ser-55. Residues Val-77–Met-96 traverse the membrane as a helical segment. Asn-82 contributes to the Na(+) binding site. The Extracellular portion of the chain corresponds to Ala-97–Ala-102. The chain crosses the membrane as a helical span at residues Leu-103 to Leu-123. Residues Lys-124–Asn-158 lie on the Cytoplasmic side of the membrane. The chain crosses the membrane as a helical span at residues Ile-159–Ile-177. At Gln-178–Gly-188 the chain is on the extracellular side. Residues Leu-189 to Leu-209 form a helical membrane-spanning segment. The Cytoplasmic portion of the chain corresponds to Ser-210–Tyr-217. The helical transmembrane segment at Leu-218 to Cys-238 threads the bilayer. Residues Lys-239 to Thr-292 lie on the Extracellular side of the membrane. Cys-245 and Cys-281 form a disulfide bridge. Residues Asn-258 and Asn-274 are each glycosylated (N-linked (GlcNAc...) asparagine). Residues Val-293–Tyr-313 traverse the membrane as a helical segment. Residues Glu-314–Lys-329 are Cytoplasmic-facing. The helical transmembrane segment at Ile-330–Phe-350 threads the bilayer. The Extracellular portion of the chain corresponds to Tyr-351–Leu-371. The chain crosses the membrane as a helical span at residues Leu-372 to Phe-392. Thr-386 lines the Na(+) pocket. Residues Pro-393–His-413 lie on the Cytoplasmic side of the membrane. A helical transmembrane segment spans residues Ser-414–Ile-434. The Extracellular segment spans residues Arg-435–Asp-436. The helical transmembrane segment at Ile-437 to Phe-457 threads the bilayer. Residues Tyr-458–Lys-472 lie on the Cytoplasmic side of the membrane. The chain crosses the membrane as a helical span at residues Ile-473–Leu-495. Residues Asp-496–His-506 lie on the Extracellular side of the membrane.

It belongs to the amino acid/polyamine transporter 2 family. In terms of processing, polyubiquitination by NEDD4L regulates the degradation and the activity of SLC38A2.

The protein localises to the cell membrane. The enzyme catalyses L-alanine(in) + Na(+)(in) = L-alanine(out) + Na(+)(out). It carries out the reaction glycine(in) + Na(+)(in) = glycine(out) + Na(+)(out). The catalysed reaction is L-serine(in) + Na(+)(in) = L-serine(out) + Na(+)(out). It catalyses the reaction L-proline(in) + Na(+)(in) = L-proline(out) + Na(+)(out). The enzyme catalyses L-methionine(in) + Na(+)(in) = L-methionine(out) + Na(+)(out). It carries out the reaction L-histidine(in) + Na(+)(in) = L-histidine(out) + Na(+)(out). The catalysed reaction is L-asparagine(in) + Na(+)(in) = L-asparagine(out) + Na(+)(out). It catalyses the reaction L-glutamine(in) + Na(+)(in) = L-glutamine(out) + Na(+)(out). The enzyme catalyses L-threonine(in) + Na(+)(in) = L-threonine(out) + Na(+)(out). It carries out the reaction L-leucine(in) + Na(+)(in) = L-leucine(out) + Na(+)(out). The catalysed reaction is L-phenylalanine(in) + Na(+)(in) = L-phenylalanine(out) + Na(+)(out). With respect to regulation, inhibited by N-methyl-D-glucamine. Inhibited by choline. Allosteric regulation of sodium ions binding by pH. Symporter that cotransports neutral amino acids and sodium ions from the extracellular to the intracellular side of the cell membrane. The transport is pH-sensitive, Li(+)-intolerant, electrogenic, driven by the Na(+) electrochemical gradient and cotransports of neutral amino acids and sodium ions with a stoichiometry of 1:1. May function in the transport of amino acids at the blood-brain barrier. May function in the transport of amino acids in the supply of maternal nutrients to the fetus through the placenta. Maintains a key metabolic glutamine/glutamate balance underpinning retrograde signaling by dendritic release of the neurotransmitter glutamate. Transports L-proline in differentiating osteoblasts for the efficient synthesis of proline-enriched proteins and provides proline essential for osteoblast differentiation and bone formation during bone development. In Pan paniscus (Pygmy chimpanzee), this protein is Sodium-coupled neutral amino acid symporter 2.